The following is a 205-amino-acid chain: Probable thymidylate kinase (205 aa).

7 to 14 is an ATP binding site; it reads GIDGSGKS.

Belongs to the thymidylate kinase family.

The catalysed reaction is dTMP + ATP = dTDP + ADP. The polypeptide is Probable thymidylate kinase (Methanoculleus marisnigri (strain ATCC 35101 / DSM 1498 / JR1)).